The primary structure comprises 466 residues: UDP-N-acetylmuramoylalanine--D-glutamate ligase (466 aa).

117–123 (GTKGKTT) is a binding site for ATP.

The protein belongs to the MurCDEF family.

It localises to the cytoplasm. It catalyses the reaction UDP-N-acetyl-alpha-D-muramoyl-L-alanine + D-glutamate + ATP = UDP-N-acetyl-alpha-D-muramoyl-L-alanyl-D-glutamate + ADP + phosphate + H(+). Its pathway is cell wall biogenesis; peptidoglycan biosynthesis. Functionally, cell wall formation. Catalyzes the addition of glutamate to the nucleotide precursor UDP-N-acetylmuramoyl-L-alanine (UMA). This Roseiflexus sp. (strain RS-1) protein is UDP-N-acetylmuramoylalanine--D-glutamate ligase.